The sequence spans 438 residues: Succinyl-CoA:glutarate CoA-transferase (438 aa).

Residues 1–31 (MLATLARVAALRRTCLFSGRGGGRGLWTGRP) constitute a mitochondrion transit peptide. The Nucleophile role is filled by Asp-205. An N6-acetyllysine modification is found at Lys-394.

It belongs to the CoA-transferase III family. As to expression, highly expressed in kidney. Intermediate expression in liver, skeletal muscle and pancreas. Little to no expression detected in other tissues examined.

It is found in the mitochondrion. The enzyme catalyses glutarate + succinyl-CoA = glutaryl-CoA + succinate. It carries out the reaction 3-hydroxy-3-methylglutarate + succinyl-CoA = (3S)-3-hydroxy-3-methylglutaryl-CoA + succinate. The catalysed reaction is 3-hydroxy-3-methylglutarate + glutaryl-CoA = (3S)-3-hydroxy-3-methylglutaryl-CoA + glutarate. It catalyses the reaction hexanedioate + glutaryl-CoA = hexanedioyl-CoA + glutarate. The enzyme catalyses itaconate + glutaryl-CoA = itaconyl-CoA + glutarate. It carries out the reaction itaconate + succinyl-CoA = itaconyl-CoA + succinate. Its activity is regulated as follows. Inhibited by valsartan and losartan carboxylate. In terms of biological role, coenzyme A (CoA) transferase that reversibly catalyzes the transfer of a CoA moiety from a dicarboxyl-CoA to a dicarboxylate in a metabolite recycling process. Displays preference for succinyl-CoA and glutarate-CoA as dicarboxyl-CoA donors and glutarate, succinate, adipate/hexanedioate, itaconate and 3-hydroxy-3-methylglutarate as dicarboxylate acceptors. Acts on intermediates or end products of lysine and tryptophan degradation pathway, in particular catalyzes succinyl-CoA-dependent reesterification of free glutarate into glutaryl-CoA to prevent renal excretion of glutarate. Upon inflammation, may convert macrophage-derived itaconate to itaconyl-CoA in erythroid precursors where it negatively regulates the TCA cycle and heme synthesis to limit erythroid differentiation in the context of stress erythropoiesis. The polypeptide is Succinyl-CoA:glutarate CoA-transferase (Homo sapiens (Human)).